We begin with the raw amino-acid sequence, 191 residues long: Adenylate kinase (191 aa).

12-17 (GSGKTT) is an ATP binding site. Residues 34-63 (STGDLLRAESAKKTERGLLIEKFTSQGELV) form an NMP region. Residues Thr-35, Arg-40, 61–63 (ELV), 88–91 (GYPR), and Gln-95 each bind AMP. The tract at residues 130-136 (GRSRGAD) is LID. Residue Arg-131 coordinates ATP. AMP is bound by residues Arg-133 and Arg-145. Residue Arg-173 coordinates ATP.

This sequence belongs to the adenylate kinase family. In terms of assembly, monomer.

It localises to the cytoplasm. The enzyme catalyses AMP + ATP = 2 ADP. The protein operates within purine metabolism; AMP biosynthesis via salvage pathway; AMP from ADP: step 1/1. Its function is as follows. Catalyzes the reversible transfer of the terminal phosphate group between ATP and AMP. Plays an important role in cellular energy homeostasis and in adenine nucleotide metabolism. The polypeptide is Adenylate kinase (Helicobacter pylori (strain HPAG1)).